A 103-amino-acid polypeptide reads, in one-letter code: N(4)-acetylcytidine amidohydrolase (103 aa).

The ASCH domain occupies 6–94 (ITFFQRFQND…IAEIYPNQTQ (89 aa)). The active-site Proton acceptor is K21. T24 (nucleophile) is an active-site residue. Residue E74 is the Proton donor of the active site.

It belongs to the N(4)-acetylcytidine amidohydrolase family.

The enzyme catalyses N(4)-acetylcytidine + H2O = cytidine + acetate + H(+). It carries out the reaction N(4)-acetyl-2'-deoxycytidine + H2O = 2'-deoxycytidine + acetate + H(+). The catalysed reaction is N(4)-acetylcytosine + H2O = cytosine + acetate + H(+). Functionally, catalyzes the hydrolysis of N(4)-acetylcytidine (ac4C). The protein is N(4)-acetylcytidine amidohydrolase (yqfB) of Salmonella heidelberg (strain SL476).